The primary structure comprises 507 residues: ATP synthase subunit alpha, chloroplastic (507 aa).

170–177 contributes to the ATP binding site; sequence GDRQTGKT. The residue at position 257 (T257) is a Phosphothreonine.

The protein belongs to the ATPase alpha/beta chains family. F-type ATPases have 2 components, CF(1) - the catalytic core - and CF(0) - the membrane proton channel. CF(1) has five subunits: alpha(3), beta(3), gamma(1), delta(1), epsilon(1). CF(0) has four main subunits: a, b, b' and c.

The protein resides in the plastid. It localises to the chloroplast thylakoid membrane. It catalyses the reaction ATP + H2O + 4 H(+)(in) = ADP + phosphate + 5 H(+)(out). In terms of biological role, produces ATP from ADP in the presence of a proton gradient across the membrane. The alpha chain is a regulatory subunit. The protein is ATP synthase subunit alpha, chloroplastic of Lobularia maritima (Sweet alyssum).